A 268-amino-acid chain; its full sequence is L-aspartate dehydrogenase (268 aa).

NAD(+)-binding residues include Ala125 and Asn191. His221 is an active-site residue.

Belongs to the L-aspartate dehydrogenase family.

The catalysed reaction is L-aspartate + NADP(+) + H2O = oxaloacetate + NH4(+) + NADPH + H(+). It carries out the reaction L-aspartate + NAD(+) + H2O = oxaloacetate + NH4(+) + NADH + H(+). Its pathway is cofactor biosynthesis; NAD(+) biosynthesis; iminoaspartate from L-aspartate (dehydrogenase route): step 1/1. Specifically catalyzes the NAD or NADP-dependent dehydrogenation of L-aspartate to iminoaspartate. The sequence is that of L-aspartate dehydrogenase from Ralstonia nicotianae (strain ATCC BAA-1114 / GMI1000) (Ralstonia solanacearum).